Here is a 141-residue protein sequence, read N- to C-terminus: HTH-type transcriptional repressor NsrR (141 aa).

The HTH rrf2-type domain maps to 2–129; that stretch reads QLTSFTDYGL…DSHTLADMVE (128 aa). A DNA-binding region (H-T-H motif) is located at residues 28–51; sequence ISEVTEVYGVSRNHMVKIINQLSR. [2Fe-2S] cluster is bound by residues Cys-91, Cys-96, and Cys-102.

The cofactor is [2Fe-2S] cluster.

Nitric oxide-sensitive repressor of genes involved in protecting the cell against nitrosative stress. May require iron for activity. This Serratia proteamaculans (strain 568) protein is HTH-type transcriptional repressor NsrR.